Consider the following 83-residue polypeptide: ATP synthase subunit c (83 aa).

Transmembrane regions (helical) follow at residues 10 to 30 and 52 to 72; these read IAVALLIGMGALGTAIGFGLL and MFIVAGLLDAVTMIGVGIALY.

It belongs to the ATPase C chain family. As to quaternary structure, F-type ATPases have 2 components, F(1) - the catalytic core - and F(0) - the membrane proton channel. F(1) has five subunits: alpha(3), beta(3), gamma(1), delta(1), epsilon(1). F(0) has three main subunits: a(1), b(2) and c(10-14). The alpha and beta chains form an alternating ring which encloses part of the gamma chain. F(1) is attached to F(0) by a central stalk formed by the gamma and epsilon chains, while a peripheral stalk is formed by the delta and b chains.

Its subcellular location is the cell inner membrane. Its function is as follows. F(1)F(0) ATP synthase produces ATP from ADP in the presence of a proton or sodium gradient. F-type ATPases consist of two structural domains, F(1) containing the extramembraneous catalytic core and F(0) containing the membrane proton channel, linked together by a central stalk and a peripheral stalk. During catalysis, ATP synthesis in the catalytic domain of F(1) is coupled via a rotary mechanism of the central stalk subunits to proton translocation. Key component of the F(0) channel; it plays a direct role in translocation across the membrane. A homomeric c-ring of between 10-14 subunits forms the central stalk rotor element with the F(1) delta and epsilon subunits. The protein is ATP synthase subunit c of Shewanella denitrificans (strain OS217 / ATCC BAA-1090 / DSM 15013).